The following is a 288-amino-acid chain: Pantothenate synthetase (288 aa).

35-42 (MGALHDGH) provides a ligand contact to ATP. The Proton donor role is filled by histidine 42. Glutamine 66 lines the (R)-pantoate pocket. Glutamine 66 contributes to the beta-alanine binding site. ATP is bound at residue 152–155 (GEKD). Glutamine 158 serves as a coordination point for (R)-pantoate. Residues glycine 181 and 189–192 (LSSR) each bind ATP.

This sequence belongs to the pantothenate synthetase family. As to quaternary structure, homodimer.

The protein resides in the cytoplasm. The catalysed reaction is (R)-pantoate + beta-alanine + ATP = (R)-pantothenate + AMP + diphosphate + H(+). It functions in the pathway cofactor biosynthesis; (R)-pantothenate biosynthesis; (R)-pantothenate from (R)-pantoate and beta-alanine: step 1/1. In terms of biological role, catalyzes the condensation of pantoate with beta-alanine in an ATP-dependent reaction via a pantoyl-adenylate intermediate. The protein is Pantothenate synthetase of Maricaulis maris (strain MCS10) (Caulobacter maris).